A 353-amino-acid chain; its full sequence is Probable G-protein coupled receptor 139 (353 aa).

Over 1 to 29 the chain is Extracellular; sequence MEHTHAHLAANSSLSWWSPGSACGLGFVP. Asn11 carries an N-linked (GlcNAc...) asparagine glycan. A helical membrane pass occupies residues 30–50; the sequence is VVYYSLLLCLGLPANILTVII. At 51–65 the chain is on the cytoplasmic side; sequence LSQLVARRQKSSYNY. A helical membrane pass occupies residues 66–86; that stretch reads LLALAAADILVLFFIVFVDFL. Residues 87-102 are Extracellular-facing; the sequence is LEDFILNMQMPQVPDK. A helical transmembrane segment spans residues 103-123; that stretch reads IIEVLEFSSIHTSIWITVPLT. The Cytoplasmic portion of the chain corresponds to 124-148; sequence IDRYIAVCHPLKYHTVSYPARTRKV. The chain crosses the membrane as a helical span at residues 149 to 169; it reads IVSVYITCFLTSIPYYWWPNI. Residues 170 to 181 are Extracellular-facing; it reads WTEDYISTSVHH. A helical transmembrane segment spans residues 182–202; that stretch reads VLIWIHCFTVYLVPCSIFFIL. The Cytoplasmic segment spans residues 203–228; sequence NSIIVYKLRRKSNFRLRGYSTGKTTA. The chain crosses the membrane as a helical span at residues 229–249; the sequence is ILFTITSIFATLWAPRIIMIL. The Extracellular segment spans residues 250–268; it reads YHLYGAPIQNRWLVHIMSD. The helical transmembrane segment at 269–289 threads the bilayer; that stretch reads IANMLALLNTAINFFLYCFIS. Residues 290–353 lie on the Cytoplasmic side of the membrane; it reads KRFRTMAAAT…KNGKPIKVSP (64 aa).

The protein belongs to the G-protein coupled receptor 1 family. As to expression, expressed almost exclusively in the brain. Detected at very low levels in the peripheral tissues.

The protein resides in the cell membrane. Its function is as follows. Orphan receptor. Seems to act through a G(q/11)-mediated pathway. In Homo sapiens (Human), this protein is Probable G-protein coupled receptor 139 (GPR139).